Consider the following 229-residue polypeptide: Protein fmp52-2, mitochondrial (229 aa).

The N-terminal 45 residues, 1–45, are a transit peptide targeting the mitochondrion; it reads MTTAAVFGSTGAVGGQILATLLASDAFSSVKTVSRRLPNAQSPKL.

Belongs to the FMP52 family.

The protein localises to the mitochondrion outer membrane. This chain is Protein fmp52-2, mitochondrial (fmp522), found in Aspergillus oryzae (strain ATCC 42149 / RIB 40) (Yellow koji mold).